Consider the following 1318-residue polypeptide: DNA-directed RNA polymerase subunit beta' (1318 aa).

Zn(2+) is bound by residues Cys-60, Cys-62, Cys-75, and Cys-78. Mg(2+)-binding residues include Asp-535, Asp-537, and Asp-539. Residues Cys-890, Cys-967, Cys-974, and Cys-977 each coordinate Zn(2+).

It belongs to the RNA polymerase beta' chain family. The RNAP catalytic core consists of 2 alpha, 1 beta, 1 beta' and 1 omega subunit. When a sigma factor is associated with the core the holoenzyme is formed, which can initiate transcription. Requires Mg(2+) as cofactor. Zn(2+) is required as a cofactor.

It catalyses the reaction RNA(n) + a ribonucleoside 5'-triphosphate = RNA(n+1) + diphosphate. Its function is as follows. DNA-dependent RNA polymerase catalyzes the transcription of DNA into RNA using the four ribonucleoside triphosphates as substrates. This chain is DNA-directed RNA polymerase subunit beta', found in Rhodococcus erythropolis (strain PR4 / NBRC 100887).